The primary structure comprises 161 residues: Crossover junction endodeoxyribonuclease RuvC (161 aa).

Catalysis depends on residues D7, E67, and D139. Mg(2+)-binding residues include D7, E67, and D139.

It belongs to the RuvC family. Homodimer which binds Holliday junction (HJ) DNA. The HJ becomes 2-fold symmetrical on binding to RuvC with unstacked arms; it has a different conformation from HJ DNA in complex with RuvA. In the full resolvosome a probable DNA-RuvA(4)-RuvB(12)-RuvC(2) complex forms which resolves the HJ. It depends on Mg(2+) as a cofactor.

It is found in the cytoplasm. It carries out the reaction Endonucleolytic cleavage at a junction such as a reciprocal single-stranded crossover between two homologous DNA duplexes (Holliday junction).. Functionally, the RuvA-RuvB-RuvC complex processes Holliday junction (HJ) DNA during genetic recombination and DNA repair. Endonuclease that resolves HJ intermediates. Cleaves cruciform DNA by making single-stranded nicks across the HJ at symmetrical positions within the homologous arms, yielding a 5'-phosphate and a 3'-hydroxyl group; requires a central core of homology in the junction. The consensus cleavage sequence is 5'-(A/T)TT(C/G)-3'. Cleavage occurs on the 3'-side of the TT dinucleotide at the point of strand exchange. HJ branch migration catalyzed by RuvA-RuvB allows RuvC to scan DNA until it finds its consensus sequence, where it cleaves and resolves the cruciform DNA. The sequence is that of Crossover junction endodeoxyribonuclease RuvC from Syntrophotalea carbinolica (strain DSM 2380 / NBRC 103641 / GraBd1) (Pelobacter carbinolicus).